Here is a 313-residue protein sequence, read N- to C-terminus: UDP-glucose 4-epimerase (313 aa).

NAD(+) is bound by residues 11–12, 31–36, 56–57, and 77–81; these read FI, DDLSSG, DI, and LAAQI. Residues Ser121 and Tyr146 each contribute to the substrate site. NAD(+)-binding residues include Tyr146 and Lys150. Tyr146 functions as the Proton acceptor in the catalytic mechanism. Residues Asn175, 189–190, 204–206, Arg213, and 271–274 each bind substrate; these read VV, KIF, and RLGD.

Belongs to the NAD(P)-dependent epimerase/dehydratase family. As to quaternary structure, homodimer. The cofactor is NAD(+).

The catalysed reaction is UDP-alpha-D-glucose = UDP-alpha-D-galactose. Its pathway is carbohydrate metabolism; galactose metabolism. Its function is as follows. Involved in the metabolism of galactose. Catalyzes the conversion of UDP-galactose (UDP-Gal) to UDP-glucose (UDP-Glc) through a mechanism involving the transient reduction of NAD. This Mycolicibacterium smegmatis (strain ATCC 700084 / mc(2)155) (Mycobacterium smegmatis) protein is UDP-glucose 4-epimerase.